The primary structure comprises 64 residues: Translation machinery-associated protein 7 homolog (64 aa).

The tract at residues 1–64 is disordered; the sequence is MTGREGGKKK…TGGIKKSGKK (64 aa). Residues 21–50 adopt a coiled-coil conformation; that stretch reads EMDEEDMAFKQKQKEQQKAMEAAKQKAAKG. Residues 27 to 44 show a composition bias toward basic and acidic residues; sequence MAFKQKQKEQQKAMEAAK.

This sequence belongs to the TMA7 family.

This chain is Translation machinery-associated protein 7 homolog, found in Aedes aegypti (Yellowfever mosquito).